Reading from the N-terminus, the 340-residue chain is Putative methionyl-tRNA formyltransferase (340 aa).

Belongs to the Fmt family.

The protein localises to the mitochondrion. It localises to the mitochondrion matrix. It is found in the cytoplasm. The enzyme catalyses L-methionyl-tRNA(fMet) + (6R)-10-formyltetrahydrofolate = N-formyl-L-methionyl-tRNA(fMet) + (6S)-5,6,7,8-tetrahydrofolate + H(+). Its function is as follows. Formylates methionyl-tRNA in mitochondria and the cytoplasm. Responsible for the formylation of the N-terminally formylated (Nt-formylated) mitochondrial matrix proteins that are encoded by mitochondrial DNA. Nt-formylated proteins in the cytoplasm are strongly up-regulated in stationary phase or upon starvation for specific amino acids and are targeted for degradation by an E3 ubiquitin ligase-mediated fMet/N-end rule pathway. Increased Nt-formylation of cytosolic proteins appears to be important for adaptation to these stresses. This is Putative methionyl-tRNA formyltransferase (fmt1) from Schizosaccharomyces pombe (strain 972 / ATCC 24843) (Fission yeast).